The primary structure comprises 153 residues: uncharacterized protein (153 aa).

A2 is modified (N-acetylalanine).

This is an uncharacterized protein from Arabidopsis thaliana (Mouse-ear cress).